Consider the following 258-residue polypeptide: Imidazole glycerol phosphate synthase subunit HisF (258 aa).

Catalysis depends on residues Asp-11 and Asp-130.

It belongs to the HisA/HisF family. In terms of assembly, heterodimer of HisH and HisF.

The protein resides in the cytoplasm. It carries out the reaction 5-[(5-phospho-1-deoxy-D-ribulos-1-ylimino)methylamino]-1-(5-phospho-beta-D-ribosyl)imidazole-4-carboxamide + L-glutamine = D-erythro-1-(imidazol-4-yl)glycerol 3-phosphate + 5-amino-1-(5-phospho-beta-D-ribosyl)imidazole-4-carboxamide + L-glutamate + H(+). It functions in the pathway amino-acid biosynthesis; L-histidine biosynthesis; L-histidine from 5-phospho-alpha-D-ribose 1-diphosphate: step 5/9. Functionally, IGPS catalyzes the conversion of PRFAR and glutamine to IGP, AICAR and glutamate. The HisF subunit catalyzes the cyclization activity that produces IGP and AICAR from PRFAR using the ammonia provided by the HisH subunit. This chain is Imidazole glycerol phosphate synthase subunit HisF, found in Escherichia coli O6:K15:H31 (strain 536 / UPEC).